The chain runs to 278 residues: Probable endonuclease 4 (278 aa).

Zn(2+) is bound by residues His-66, His-106, Glu-140, Asp-172, His-175, His-209, Asp-222, His-224, and Glu-254.

This sequence belongs to the AP endonuclease 2 family. Zn(2+) serves as cofactor.

It catalyses the reaction Endonucleolytic cleavage to 5'-phosphooligonucleotide end-products.. Its function is as follows. Endonuclease IV plays a role in DNA repair. It cleaves phosphodiester bonds at apurinic or apyrimidinic (AP) sites, generating a 3'-hydroxyl group and a 5'-terminal sugar phosphate. In Haloquadratum walsbyi (strain DSM 16790 / HBSQ001), this protein is Probable endonuclease 4.